Here is a 433-residue protein sequence, read N- to C-terminus: Cyclin-dependent kinase 15 (433 aa).

Residues 46-83 (ASSSTASFHPRGLEAASAQKLKSKRPRSNSDSFQEENL) form a disordered region. One can recognise a Protein kinase domain in the interval 52–336 (SFHPRGLEAA…SKLPNYNPEW (285 aa)). Residues 58–66 (LEAASAQKL) and Glu-81 contribute to the ATP site. The Proton acceptor role is filled by Thr-173.

The protein belongs to the protein kinase superfamily. CMGC Ser/Thr protein kinase family. CDC2/CDKX subfamily. Requires Mg(2+) as cofactor.

It carries out the reaction L-seryl-[protein] + ATP = O-phospho-L-seryl-[protein] + ADP + H(+). The enzyme catalyses L-threonyl-[protein] + ATP = O-phospho-L-threonyl-[protein] + ADP + H(+). Its function is as follows. Serine/threonine-protein kinase that acts like an antiapoptotic protein that counters TRAIL/TNFSF10-induced apoptosis by inducing phosphorylation of BIRC5 at 'Thr-34'. The polypeptide is Cyclin-dependent kinase 15 (Cdk15) (Mus musculus (Mouse)).